Reading from the N-terminus, the 89-residue chain is Small ribosomal subunit protein uS15 (89 aa).

Belongs to the universal ribosomal protein uS15 family. In terms of assembly, part of the 30S ribosomal subunit. Forms a bridge to the 50S subunit in the 70S ribosome, contacting the 23S rRNA.

One of the primary rRNA binding proteins, it binds directly to 16S rRNA where it helps nucleate assembly of the platform of the 30S subunit by binding and bridging several RNA helices of the 16S rRNA. In terms of biological role, forms an intersubunit bridge (bridge B4) with the 23S rRNA of the 50S subunit in the ribosome. This Prochlorococcus marinus (strain MIT 9515) protein is Small ribosomal subunit protein uS15.